Consider the following 176-residue polypeptide: Translation initiation factor IF-3 (176 aa).

This sequence belongs to the IF-3 family. As to quaternary structure, monomer.

It localises to the cytoplasm. Its function is as follows. IF-3 binds to the 30S ribosomal subunit and shifts the equilibrium between 70S ribosomes and their 50S and 30S subunits in favor of the free subunits, thus enhancing the availability of 30S subunits on which protein synthesis initiation begins. The protein is Translation initiation factor IF-3 of Streptococcus pyogenes serotype M18 (strain MGAS8232).